Reading from the N-terminus, the 663-residue chain is UvrABC system protein B (663 aa).

Positions 1–10 (MIDKRDDKPF) are enriched in basic and acidic residues. The interval 1-23 (MIDKRDDKPFKLKSKYKPSGDQP) is disordered. The 388-residue stretch at 31–418 (DNIEGGEKAQ…TNTIIEQIIR (388 aa)) folds into the Helicase ATP-binding domain. 44–51 (GATGTGKT) serves as a coordination point for ATP. The Beta-hairpin motif lies at 97 to 120 (YYDYYQPEAYVPSSDTYIEKDSSV). Positions 435 to 601 (QMDDLLGEIN…TIKKDIRGLI (167 aa)) constitute a Helicase C-terminal domain. In terms of domain architecture, UVR spans 627 to 662 (KEAINALQKQMQEAAELLDFELAAQMRDLILELKLM).

It belongs to the UvrB family. As to quaternary structure, forms a heterotetramer with UvrA during the search for lesions. Interacts with UvrC in an incision complex.

It localises to the cytoplasm. In terms of biological role, the UvrABC repair system catalyzes the recognition and processing of DNA lesions. A damage recognition complex composed of 2 UvrA and 2 UvrB subunits scans DNA for abnormalities. Upon binding of the UvrA(2)B(2) complex to a putative damaged site, the DNA wraps around one UvrB monomer. DNA wrap is dependent on ATP binding by UvrB and probably causes local melting of the DNA helix, facilitating insertion of UvrB beta-hairpin between the DNA strands. Then UvrB probes one DNA strand for the presence of a lesion. If a lesion is found the UvrA subunits dissociate and the UvrB-DNA preincision complex is formed. This complex is subsequently bound by UvrC and the second UvrB is released. If no lesion is found, the DNA wraps around the other UvrB subunit that will check the other stand for damage. This chain is UvrABC system protein B, found in Streptococcus pyogenes serotype M3 (strain ATCC BAA-595 / MGAS315).